The sequence spans 463 residues: Phosphoglucosamine mutase (463 aa).

Ser-108 acts as the Phosphoserine intermediate in catalysis. Residues Ser-108, Asp-247, Asp-249, and Asp-251 each contribute to the Mg(2+) site. At Ser-108 the chain carries Phosphoserine.

This sequence belongs to the phosphohexose mutase family. The cofactor is Mg(2+). In terms of processing, activated by phosphorylation.

The enzyme catalyses alpha-D-glucosamine 1-phosphate = D-glucosamine 6-phosphate. Catalyzes the conversion of glucosamine-6-phosphate to glucosamine-1-phosphate. The sequence is that of Phosphoglucosamine mutase from Nitrosospira multiformis (strain ATCC 25196 / NCIMB 11849 / C 71).